The following is a 395-amino-acid chain: Multidrug resistance protein MdtL (395 aa).

Helical transmembrane passes span 4–24 (FLLCSFALVLLYPAGIDMYLV), 42–62 (IAFSVYLAGMATAMLFAGKIA), 69–89 (PVAIVGAIVFMMASLLCSRAS), 93–113 (LFLSGRFLQGIGAGGCYVVAF), 131–151 (LLNGITCIVPVLAPVVGHLIM), 158–178 (SLFYTMSAMGIIVGLLSLFIL), 217–237 (VSVILTFVNASPVLLMEVMGF), 247–267 (ALTAGVSMVVSFSTPFALGLF), 271–291 (TLMLVSQGLFLTAGVTLSLAH), 295–315 (VTLFGLTLICAGFSVGFGVAM), 328–350 (VASSTLGIAQVCGSSLWIWLAAI), and 355–377 (AMNMLIGILIGCSIVSILLIFSV).

Belongs to the major facilitator superfamily. DHA1 family. MdtL (TC 2.A.1.2.22) subfamily.

The protein resides in the cell inner membrane. This chain is Multidrug resistance protein MdtL, found in Salmonella dublin (strain CT_02021853).